The chain runs to 310 residues: Pseudouridine-5'-phosphate glycosidase (310 aa).

Residue Glu26 is the Proton donor of the active site. Residues Lys87 and Val107 each coordinate substrate. Residue Asp139 participates in Mn(2+) binding. A substrate-binding site is contributed by 141 to 143; that stretch reads SAD. Residue Lys160 is the Nucleophile of the active site.

The protein belongs to the pseudouridine-5'-phosphate glycosidase family. As to quaternary structure, homotrimer. The cofactor is Mn(2+).

The catalysed reaction is D-ribose 5-phosphate + uracil = psi-UMP + H2O. Catalyzes the reversible cleavage of pseudouridine 5'-phosphate (PsiMP) to ribose 5-phosphate and uracil. Functions biologically in the cleavage direction, as part of a pseudouridine degradation pathway. The chain is Pseudouridine-5'-phosphate glycosidase from Roseobacter denitrificans (strain ATCC 33942 / OCh 114) (Erythrobacter sp. (strain OCh 114)).